We begin with the raw amino-acid sequence, 518 residues long: Gypsy retrotransposon integrase-like protein 1 (518 aa).

One can recognise an Integrase catalytic domain in the interval 135–293 (VVGNPWSVVT…PYFQMFNRNP (159 aa)). Residues 326–348 (NQTPAAGQMESSTSEELSKSKVA) are disordered. A Phosphoserine modification is found at serine 498.

This chain is Gypsy retrotransposon integrase-like protein 1 (GIN1), found in Rattus norvegicus (Rat).